A 105-amino-acid polypeptide reads, in one-letter code: MSTLPRELVVWPIRCYQRFISPCLPPACRYVPTCSAYAAEAVLTHGVVRGLLLACRRLLRCHPWCAGGYDPVPPPRHSGCAVPGASATATARHATAQELSISHGK.

It belongs to the UPF0161 family.

Its subcellular location is the cell inner membrane. In terms of biological role, could be involved in insertion of integral membrane proteins into the membrane. This chain is Putative membrane protein insertion efficiency factor, found in Nitratidesulfovibrio vulgaris (strain DSM 19637 / Miyazaki F) (Desulfovibrio vulgaris).